Reading from the N-terminus, the 520-residue chain is ADP,ATP carrier protein 4 (520 aa).

Transmembrane regions (helical) follow at residues 43-63 (LSKF…QNLI), 80-100 (ISFL…AIYV), 111-131 (IFYL…YVIF), 166-186 (FSLF…LLFW), 201-221 (FYPL…QFLE), 240-260 (FHTL…IVGI), 305-325 (LIAT…GPWK), 339-359 (AAFI…FVVL), 370-390 (FTAA…FFAV), 399-419 (LIVA…IGAI), 462-482 (LGKS…PSAS), and 485-505 (SISV…FWAV).

It belongs to the ADP/ATP translocase tlc family.

The protein localises to the cell membrane. Functionally, provides the rickettsial cell with host ATP in exchange for rickettsial ADP. This is an obligate exchange system. This energy acquiring activity is an important component of rickettsial parasitism. This chain is ADP,ATP carrier protein 4 (tlcD), found in Rickettsia bellii (strain RML369-C).